A 144-amino-acid polypeptide reads, in one-letter code: 3-dehydroquinate dehydratase (144 aa).

Tyr24 functions as the Proton acceptor in the catalytic mechanism. Residues Asn76, His82, and Asp89 each coordinate substrate. Catalysis depends on His102, which acts as the Proton donor. Residues 103–104 (LS) and Arg113 each bind substrate.

It belongs to the type-II 3-dehydroquinase family. Homododecamer.

It carries out the reaction 3-dehydroquinate = 3-dehydroshikimate + H2O. Its pathway is metabolic intermediate biosynthesis; chorismate biosynthesis; chorismate from D-erythrose 4-phosphate and phosphoenolpyruvate: step 3/7. Catalyzes a trans-dehydration via an enolate intermediate. This Nitrosomonas europaea (strain ATCC 19718 / CIP 103999 / KCTC 2705 / NBRC 14298) protein is 3-dehydroquinate dehydratase.